We begin with the raw amino-acid sequence, 249 residues long: tRNA pseudouridine synthase A (249 aa).

The Nucleophile role is filled by D53. Y111 serves as a coordination point for substrate.

This sequence belongs to the tRNA pseudouridine synthase TruA family. In terms of assembly, homodimer.

The enzyme catalyses uridine(38/39/40) in tRNA = pseudouridine(38/39/40) in tRNA. In terms of biological role, formation of pseudouridine at positions 38, 39 and 40 in the anticodon stem and loop of transfer RNAs. In Streptococcus pneumoniae (strain 70585), this protein is tRNA pseudouridine synthase A.